The chain runs to 553 residues: Arginine--tRNA ligase (553 aa).

The 'HIGH' region motif lies at 130–140; sequence ANPTGDLHIGH.

Belongs to the class-I aminoacyl-tRNA synthetase family. As to quaternary structure, monomer.

Its subcellular location is the cytoplasm. The enzyme catalyses tRNA(Arg) + L-arginine + ATP = L-arginyl-tRNA(Arg) + AMP + diphosphate. The protein is Arginine--tRNA ligase of Staphylococcus aureus (strain MRSA252).